Consider the following 114-residue polypeptide: MDTKMQSLPTTHPHPHSSSRPQSHTNNQCACSHHCRSCSQAGHPSSSSSPSPGPPTKHPKTPMHSRYSPSRPSHRGSCPKNRKTLEGKVSKRKAVRRRKRTHRAKRRSSGRRYK.

The tract at residues 1 to 114 (MDTKMQSLPT…KRRSSGRRYK (114 aa)) is disordered. His12, His14, His16, His24, Cys29, Cys31, Cys35, and Cys38 together coordinate Zn(2+). Residues 16–25 (HSSSRPQSHT) show a composition bias toward low complexity. The Nuclear localization signal motif lies at 87 to 95 (GKVSKRKAV). Residues 90 to 114 (SKRKAVRRRKRTHRAKRRSSGRRYK) show a composition bias toward basic residues. Thr101 is subject to Phosphothreonine; by PKA. Residue Ser109 is modified to Phosphoserine; by PKA.

The protein belongs to the nuclear transition protein 2 family. As to expression, testis.

The protein localises to the nucleus. The protein resides in the nucleolus. It localises to the chromosome. Its function is as follows. Plays a key role in the replacement of histones to protamine in the elongating spermatids of mammals. In condensing spermatids, loaded onto the nucleosomes, where it promotes the recruitment and processing of protamines, which are responsible for histone eviction. The protein is Nuclear transition protein 2 (Tnp2) of Rattus norvegicus (Rat).